The chain runs to 223 residues: 7-cyano-7-deazaguanine synthase (223 aa).

15–25 (FSGGQDSTTCL) contacts ATP. Zn(2+) contacts are provided by Cys191, Cys200, Cys203, and Cys206.

The protein belongs to the QueC family. Homodimer. Zn(2+) is required as a cofactor.

The catalysed reaction is 7-carboxy-7-deazaguanine + NH4(+) + ATP = 7-cyano-7-deazaguanine + ADP + phosphate + H2O + H(+). It functions in the pathway purine metabolism; 7-cyano-7-deazaguanine biosynthesis. In terms of biological role, catalyzes the ATP-dependent conversion of 7-carboxy-7-deazaguanine (CDG) to 7-cyano-7-deazaguanine (preQ(0)). This chain is 7-cyano-7-deazaguanine synthase, found in Staphylococcus haemolyticus (strain JCSC1435).